The following is a 414-amino-acid chain: Serine/threonine transporter SstT (414 aa).

8 consecutive transmembrane segments (helical) span residues 16–36, 46–66, 84–104, 143–163, 180–200, 219–239, 300–320, and 332–352; these read GSLVKQILVGLVLGILLAWIS, LGTLFVGALKAVAPVLVLMLV, ILFLYLLGTFSAALAAVVFSF, ALLNANYIGILVWAVGLGFAL, AVTFMVKLVIRFAPVGIFGLV, LVVLIGCMLLVALMVNPLLVF, MAGAAITITVLTLAAVHTLGV, and VVASLCACGASGVAGGSLLLI.

This sequence belongs to the dicarboxylate/amino acid:cation symporter (DAACS) (TC 2.A.23) family.

It is found in the cell inner membrane. It catalyses the reaction L-serine(in) + Na(+)(in) = L-serine(out) + Na(+)(out). The catalysed reaction is L-threonine(in) + Na(+)(in) = L-threonine(out) + Na(+)(out). Involved in the import of serine and threonine into the cell, with the concomitant import of sodium (symport system). This Salmonella heidelberg (strain SL476) protein is Serine/threonine transporter SstT.